A 407-amino-acid chain; its full sequence is Substance-P receptor (407 aa).

The Extracellular portion of the chain corresponds to 1 to 31 (MDNVLPGDSDLFPNISTNSSESNQFVQPAWQ). Asn14 and Asn18 each carry an N-linked (GlcNAc...) asparagine glycan. The chain crosses the membrane as a helical span at residues 32–54 (IVLWAAAYTVIVVTSVVGNVVVM). The Cytoplasmic portion of the chain corresponds to 55–64 (WIILAHKRMR). A helical membrane pass occupies residues 65–86 (TVTNYFLVNLAFAEASMAAFNT). The Extracellular portion of the chain corresponds to 87–106 (VVNFTYAVHNEWYYGLFYCK). N-linked (GlcNAc...) asparagine glycosylation occurs at Asn89. A disulfide bridge links Cys105 with Cys180. The chain crosses the membrane as a helical span at residues 107-128 (FHNFFPIAAVFASIYSMTAVAF). Over 129-148 (DRYMAIIHPLQPRLSATATK) the chain is Cytoplasmic. The helical transmembrane segment at 149–169 (VVIFVIWVLALLLAFPQGYYS) threads the bilayer. Topologically, residues 170–194 (TTETMPGRVVCMIEWPEHPNRTYEK) are extracellular. Residue Asn189 is glycosylated (N-linked (GlcNAc...) asparagine). The chain crosses the membrane as a helical span at residues 195–219 (AYHICVTVLIYFLPLLVIGYAYTVV). The Cytoplasmic portion of the chain corresponds to 220 to 248 (GITLWASEIPGDSSDRYHEQVSAKRKVVK). The chain crosses the membrane as a helical span at residues 249–270 (MMIVVVCTFAICWLPFHVFFLL). Topologically, residues 271–283 (PYINPDLYVKKFI) are extracellular. The helical transmembrane segment at 284-308 (QQVYLAIMWLAMSSTMYNPIIYCCL) threads the bilayer. Over 309–407 (NDRFRLGFKH…SSSFYSNMLA (99 aa)) the chain is Cytoplasmic. The S-palmitoyl cysteine moiety is linked to residue Cys322. Residues 365-407 (HEDEAEEGPKATPSSLDLTSNGSSRSNSKTMTESSSFYSNMLA) form a disordered region. Positions 376–407 (TPSSLDLTSNGSSRSNSKTMTESSSFYSNMLA) are enriched in polar residues.

Belongs to the G-protein coupled receptor 1 family. In terms of assembly, interacts with ARRB1.

Its subcellular location is the cell membrane. In terms of biological role, this is a receptor for the tachykinin neuropeptide substance P. It is probably associated with G proteins that activate a phosphatidylinositol-calcium second messenger system. The protein is Substance-P receptor (TACR1) of Meriones unguiculatus (Mongolian jird).